Consider the following 137-residue polypeptide: Ribonuclease VapC27 (137 aa).

Residues 7–125 enclose the PINc domain; it reads VDTSVAIPLL…ATRDARAKDT (119 aa). Residues Asp8 and Asp101 each coordinate Mg(2+).

It belongs to the PINc/VapC protein family. In terms of assembly, interacts with cognate antitoxin VapB27. Requires Mg(2+) as cofactor.

It is found in the secreted. Its function is as follows. Probably the toxic component of a type II toxin-antitoxin (TA) system. An RNase. Its cognate antitoxin is VapB27. This chain is Ribonuclease VapC27, found in Mycobacterium tuberculosis (strain ATCC 25618 / H37Rv).